The following is a 35-amino-acid chain: Water stress-responsive protein 7 (35 aa).

This chain is Water stress-responsive protein 7, found in Pinus pinaster (Maritime pine).